A 667-amino-acid chain; its full sequence is Beta-galactosidase LacA (667 aa).

Arg-109 is a binding site for substrate. Residue Cys-113 coordinates Zn(2+). Asn-147 provides a ligand contact to substrate. The active-site Proton donor is the Glu-148. Zn(2+) is bound by residues Cys-153, Cys-155, and Cys-158. Glu-307 acts as the Nucleophile in catalysis. Substrate contacts are provided by residues Trp-315 and 355–358; that span reads EKFH.

This sequence belongs to the glycosyl hydrolase 42 family.

It catalyses the reaction Hydrolysis of terminal non-reducing beta-D-galactose residues in beta-D-galactosides.. Functionally, hydrolyzes lactose, oNP-galactoside (oNPG), pNP-galactosidase (pNPG), pNP-mannoside, pNP-glucoside, pNP-fucoside, pNP-N-acetylglucosamide, but not pNP-arabinoside or 4-methylumbelliferyl-beta-galactopyranoside (MUG). Transgalactosylates lactose at 10 g/L, but not at 270 g/L. The protein is Beta-galactosidase LacA of Lactobacillus acidophilus.